A 192-amino-acid polypeptide reads, in one-letter code: NADH:FMN oxidoreductase (192 aa).

A disordered region spans residues 1-20 (MSDKPNAVSSHTTPDVPEVA). Residues 60–63 (TATS), 77–84 (NIAETSSS), Ala-111, and Arg-117 contribute to the FMN site.

Belongs to the non-flavoprotein flavin reductase family.

Its subcellular location is the cytoplasm. The enzyme catalyses FMNH2 + NAD(+) = FMN + NADH + 2 H(+). The protein operates within sulfur metabolism; dibenzothiophene degradation. Its function is as follows. An NADH:FMN oxidoreductase which supplies reduced FMN for the '4S' desulfurization pathway that removes covalently bound sulfur from dibenzothiophene (DBT) without breaking carbon-carbon bonds. Provides DszA and DszC (DBTO2-monooxygenase and DBT-monooxygenase respectively) with reduced flavin (FMN). The polypeptide is NADH:FMN oxidoreductase (Rhodococcus erythropolis (Arthrobacter picolinophilus)).